A 301-amino-acid polypeptide reads, in one-letter code: Homoserine O-acetyltransferase (301 aa).

The Acyl-thioester intermediate role is filled by Cys-142. Positions 163 and 192 each coordinate substrate. The active-site Proton acceptor is His-235. Glu-237 is an active-site residue. Position 249 (Arg-249) interacts with substrate.

This sequence belongs to the MetA family.

The protein resides in the cytoplasm. The enzyme catalyses L-homoserine + acetyl-CoA = O-acetyl-L-homoserine + CoA. Its pathway is amino-acid biosynthesis; L-methionine biosynthesis via de novo pathway; O-acetyl-L-homoserine from L-homoserine: step 1/1. In terms of biological role, transfers an acetyl group from acetyl-CoA to L-homoserine, forming acetyl-L-homoserine. This Novosphingobium aromaticivorans (strain ATCC 700278 / DSM 12444 / CCUG 56034 / CIP 105152 / NBRC 16084 / F199) protein is Homoserine O-acetyltransferase.